The chain runs to 625 residues: Cytoskeleton-associated protein 2 (625 aa).

2 stretches are compositionally biased toward polar residues: residues 1–22 (MSTP…QSAF) and 107–128 (NELT…NQTL). Disordered stretches follow at residues 1-27 (MSTP…EQRR), 104-138 (KPSN…DDPQ), and 153-173 (NSKK…VPKK). Residues 159–170 (VITEKPKHDANV) are compositionally biased toward basic and acidic residues. Residue S190 is modified to Phosphoserine. 4 disordered regions span residues 195–237 (LQVK…SHMT), 259–282 (SQHN…VTVQ), 322–398 (RPAS…QNEQ), and 484–521 (SGKL…TPST). 2 stretches are compositionally biased toward basic and acidic residues: residues 359-373 (ETAE…EWKA) and 500-514 (DCEK…DPTS). Residues T518 and T521 each carry the phosphothreonine modification. S534 carries the phosphoserine modification. A phosphothreonine mark is found at T535 and T536. Y538 is subject to Phosphotyrosine. A Phosphoserine modification is found at S541.

This sequence belongs to the CKAP2 family. As to quaternary structure, associates with alpha- and beta-tubulins.

Its subcellular location is the cytoplasm. The protein localises to the cytoskeleton. Functionally, possesses microtubule stabilizing properties. Involved in regulating aneuploidy, cell cycling, and cell death in a p53/TP53-dependent manner. The protein is Cytoskeleton-associated protein 2 (CKAP2) of Bos taurus (Bovine).